The primary structure comprises 317 residues: Probable cell division protein WhiA (317 aa).

Positions 281-314 form a DNA-binding region, H-T-H motif; sequence SLKELGKMLEPPVGKSGVNHRLRKIEKIAEELRK.

It belongs to the WhiA family.

Involved in cell division and chromosome segregation. This chain is Probable cell division protein WhiA, found in Clostridium acetobutylicum (strain ATCC 824 / DSM 792 / JCM 1419 / IAM 19013 / LMG 5710 / NBRC 13948 / NRRL B-527 / VKM B-1787 / 2291 / W).